The chain runs to 832 residues: Prickle-like protein 1 (832 aa).

The 109-residue stretch at 14–122 (FGCQRSSTSD…TIKLLSRAVM (109 aa)) folds into the PET domain. LIM zinc-binding domains follow at residues 124-188 (AVCE…ELLK), 189-249 (PRCS…LYAE), and 250-313 (YCET…EDIH). The tract at residues 314–342 (ASDSSDSAFQSARSRDSRRSVRMGRSSRS) is disordered. S315, S592, and S595 each carry phosphoserine. Disordered stretches follow at residues 663 to 688 (HFEE…DNAL) and 765 to 832 (SSST…CIIS). Basic residues predominate over residues 670–681 (RPHHHRHRRSRK). S684 bears the Phosphoserine mark. The segment covering 798–815 (DLSSPASALPTPQFTQRT) has biased composition (polar residues). Positions 816-832 (TKSKKKKGHKGKNCIIS) are enriched in basic residues. C829 is modified (cysteine methyl ester). C829 carries S-farnesyl cysteine lipidation. A propeptide spans 830–832 (IIS) (removed in mature form).

The protein belongs to the prickle / espinas / testin family. Interacts with REST.

The protein resides in the nucleus membrane. Its subcellular location is the cytoplasm. It is found in the cytosol. In terms of biological role, involved in the planar cell polarity pathway that controls convergent extension during gastrulation and neural tube closure. Convergent extension is a complex morphogenetic process during which cells elongate, move mediolaterally, and intercalate between neighboring cells, leading to convergence toward the mediolateral axis and extension along the anteroposterior axis. Necessary for nuclear localization of REST. May serve as nuclear receptor. This Mus musculus (Mouse) protein is Prickle-like protein 1 (Prickle1).